The primary structure comprises 364 residues: Fructose-bisphosphate aldolase A (364 aa).

Y5 carries the phosphotyrosine modification. The residue at position 9 (T9) is a Phosphothreonine. Residues S36 and S39 each carry the phosphoserine modification. An N6-acetyllysine; alternate modification is found at K42. Residue K42 forms a Glycyl lysine isopeptide (Lys-Gly) (interchain with G-Cter in SUMO1); alternate linkage. K42 participates in a covalent cross-link: Glycyl lysine isopeptide (Lys-Gly) (interchain with G-Cter in SUMO2); alternate. R43 is a beta-D-fructose 1,6-bisphosphate binding site. S46 bears the Phosphoserine mark. K99 carries the N6-(2-hydroxyisobutyryl)lysine modification. K108 carries the post-translational modification N6-acetyllysine. K111 carries the N6-acetyllysine; alternate modification. K111 bears the N6-malonyllysine; alternate mark. The residue at position 132 (S132) is a Phosphoserine. K147 carries the N6-(2-hydroxyisobutyryl)lysine modification. The Proton acceptor role is filled by E188. The active-site Schiff-base intermediate with dihydroxyacetone-P is the K230. Position 272 is a phosphoserine (S272). Beta-D-fructose 1,6-bisphosphate is bound by residues 272 to 274, S301, and R304; that span reads SGG. K312 is modified (N6-malonyllysine). K330 is subject to N6-acetyllysine.

This sequence belongs to the class I fructose-bisphosphate aldolase family. As to quaternary structure, homotetramer. Interacts with SNX9 and WAS. Interacts with FBP2; the interaction blocks FBP2 inhibition by physiological concentrations of AMP and reduces inhibition by Ca(2+).

The protein resides in the cytoplasm. Its subcellular location is the myofibril. It is found in the sarcomere. The protein localises to the i band. It localises to the m line. It catalyses the reaction beta-D-fructose 1,6-bisphosphate = D-glyceraldehyde 3-phosphate + dihydroxyacetone phosphate. The protein operates within carbohydrate degradation; glycolysis; D-glyceraldehyde 3-phosphate and glycerone phosphate from D-glucose: step 4/4. Catalyzes the reversible conversion of beta-D-fructose 1,6-bisphosphate (FBP) into two triose phosphate and plays a key role in glycolysis and gluconeogenesis. In addition, may also function as scaffolding protein. This Pongo abelii (Sumatran orangutan) protein is Fructose-bisphosphate aldolase A (ALDOA).